We begin with the raw amino-acid sequence, 106 residues long: Photosystem II 5 kDa protein, chloroplastic (106 aa).

A chloroplast-targeting transit peptide spans 1–76; sequence MASITMMSSF…ACSVAKTAMA (76 aa). Residues cysteine 95 and cysteine 104 are joined by a disulfide bond.

Post-translationally, disulfide bond. Expressed in midvein, lamina and periphery of leaves (at protein level).

It is found in the plastid. The protein localises to the chloroplast thylakoid membrane. Functionally, may be a component of the oxygen-evolving complex. This Petunia hybrida (Petunia) protein is Photosystem II 5 kDa protein, chloroplastic.